The following is a 349-amino-acid chain: MGDMGDPPKKKRLISLCVGCGNQIHDQYILRVSPDLEWHAACLKCAECNQYLDESCTCFVRDGKTYCKRDYIRLYGIKCAKCSIGFSKNDFVMRARSKVYHIECFRCVACSRQLIPGDEFALREDGLFCRADHDVVERASLGAGDPLSPLHPARPLQMAAEPISARQPALRPHVHKQPEKTTRVRTVLNEKQLHTLRTCYAANPRPDALMKEQLVEMTGLSPRVIRVWFQNKRCKDKKRSIMMKQLQQQQPNDKTNIQGMTGTPMVAASPERHDGGLQANPVEVQSYQPPWKVLSDFALQSDIDQPAFQQLVNFSEGGPGSNSTGSEVASMSSQLPDTPNSMVASPIEA.

2 LIM zinc-binding domains span residues 17–70 (CVGC…CKRD) and 79–133 (CAKC…RADH). Positions 181-240 (TTRVRTVLNEKQLHTLRTCYAANPRPDALMKEQLVEMTGLSPRVIRVWFQNKRCKDKKRS) form a DNA-binding region, homeobox. The tract at residues 262–291 (GTPMVAASPERHDGGLQANPVEVQSYQPPW) is LIM-binding domain (LID). A disordered region spans residues 312-349 (VNFSEGGPGSNSTGSEVASMSSQLPDTPNSMVASPIEA). Residues 321-343 (SNSTGSEVASMSSQLPDTPNSMV) show a composition bias toward polar residues.

As to quaternary structure, at neuronal promoters, displaces LDB1 from LHX3 LIM domain to form a ternary complex in which ISL1 contacts both LHX3 and LDB1; allosteric structural changes in the DNA binding domain of LHX3, induced by the ISL1:LHX3 interaction, may explain differences in sequence specificity of the different complexes. Interacts with LHX3. Interacts (via C-terminus) with POU4F2 (via C-terminus) isoform 1. Interacts with POU3F2. Interacts with POU4F3. Interacts (via N-terminal domain) with MLIP; the interaction represses ISL1 transactivator activity. Interacts with GCN5/KAT2A. Interactions of ISL1 with MLIP1 or KAT2A may be mutually exclusive. Ubiquitinated probably by WWP1 E3 ubiquitin ligase; ubiquitination is followed by protein degradation. Post-translationally, phosphorylated. Expressed in subsets of neurons of the adrenal medulla and dorsal root ganglion, inner nuclear and ganglion cell layers in the retina, the pineal and some regions of the brain.

It is found in the nucleus. Functionally, DNA-binding transcriptional activator. Recognizes and binds to the consensus octamer binding site 5'-ATAATTAA-3' in promoter of target genes. Plays a fundamental role in the gene regulatory network essential for retinal ganglion cell (RGC) differentiation. Cooperates with the transcription factor POU4F2 to achieve maximal levels of expression of RGC target genes and RGC fate specification in the developing retina. Involved in the specification of motor neurons in cooperation with LHX3 and LDB1. Binds to insulin gene enhancer sequences. Essential for heart development. Marker of one progenitor cell population that give rise to the outflow tract, right ventricle, a subset of left ventricular cells, and a large number of atrial cells as well, its function is required for these progenitors to contribute to the heart. Controls the expression of FGF and BMP growth factors in this cell population and is required for proliferation and survival of cells within pharyngeal foregut endoderm and adjacent splanchnic mesoderm as well as for migration of cardiac progenitors into the heart. The sequence is that of Insulin gene enhancer protein ISL-1 (ISL1) from Homo sapiens (Human).